Reading from the N-terminus, the 201-residue chain is MSKRIAGPEIERLIQLLARVPGLGPRSARRAALHLIKKKEALLVPLGGAMQEAAEKVRICSCCGNVDTSDPCTICTDERRDPTTLIVVEDVSDLWALERAGTMNVRYHVLGGRLSPLDGIGPDDLNIKGLVERVSTGEIKEVILAVNATVEGQTTAHYITDQLSSFDVRVTRLAHGVPVGGELDYLDEGTLAAALRARTTL.

The C4-type zinc finger occupies 60 to 75; sequence CSCCGNVDTSDPCTIC. Residues 83–178 form the Toprim domain; the sequence is TTLIVVEDVS…RVTRLAHGVP (96 aa).

Belongs to the RecR family.

Its function is as follows. May play a role in DNA repair. It seems to be involved in an RecBC-independent recombinational process of DNA repair. It may act with RecF and RecO. The sequence is that of Recombination protein RecR from Brucella anthropi (strain ATCC 49188 / DSM 6882 / CCUG 24695 / JCM 21032 / LMG 3331 / NBRC 15819 / NCTC 12168 / Alc 37) (Ochrobactrum anthropi).